The sequence spans 467 residues: Repressible acid phosphatase (467 aa).

An N-terminal signal peptide occupies residues 1–17; that stretch reads MFKSVVYSILAASLANA. His-75 (nucleophile) is an active-site residue. Residues Asn-97, Asn-103, Asn-162, Asn-192, Asn-250, and Asn-315 are each glycosylated (N-linked (GlcNAc...) asparagine). Asp-338 functions as the Proton donor in the catalytic mechanism. Asn-356, Asn-390, Asn-439, Asn-445, Asn-456, and Asn-461 each carry an N-linked (GlcNAc...) asparagine glycan.

The protein belongs to the histidine acid phosphatase family. In terms of processing, glycosylated during secretion across the membrane.

Its subcellular location is the secreted. It carries out the reaction a phosphate monoester + H2O = an alcohol + phosphate. In terms of biological role, partially mediates extracellular nucleotide derived phosphate hydrolysis along with NPP1 and NPP2. The protein is Repressible acid phosphatase (PHO5) of Saccharomyces cerevisiae (strain ATCC 204508 / S288c) (Baker's yeast).